The sequence spans 744 residues: Cell division cycle protein 27 homolog B (744 aa).

The TPR 1 repeat unit spans residues 101–134 (AAGHYLLGLIYKYTDRRKNAAQQFKQSLTIDPLL). Residues 180–199 (NEERNSTSTKNTSSEDYSPR) show a composition bias toward polar residues. Disordered stretches follow at residues 180-218 (NEER…NFHS) and 359-390 (ENMD…NDQE). The segment covering 363-374 (EGVRGEPFDDSR) has biased composition (basic and acidic residues). Over residues 375–387 (PNTASTTGSMASN) the composition is skewed to polar residues. TPR repeat units lie at residues 450-483 (GWVL…SPYC), 518-551 (PQSW…NPRF), 553-585 (YAHT…DTRH), 587-619 (NAWY…NPSS), 621-653 (VIMS…DRKN), 655-687 (LPMY…APSE), and 688-721 (SSVY…KPPA).

This sequence belongs to the APC3/CDC27 family. The APC/C is composed of at least 10 subunits. Can homodimerize. Interacts with APC2, APC10, FZR2 and FZR3. Interacts with PANS1. Interacts with SAMBA. In terms of tissue distribution, specifically expressed in dividing and elongating cells.

The protein resides in the nucleus. Its pathway is protein modification; protein ubiquitination. Functionally, component of the anaphase promoting complex/cyclosome (APC/C), a cell cycle-regulated E3 ubiquitin-protein ligase complex that controls progression through mitosis and the G1 phase of the cell cycle. The APC/C complex controls several key steps in the cell cycle by mediating ubiquitination and subsequent degradation of target proteins such as cyclins. The APC/C complex is required for the female gametophyte development and is involved in several aspect of development by controlling cell division and cell elongation. Involved in the control of endoreduplication. Functionally redundant with CDC27A in the control of gametophyte development. In Arabidopsis thaliana (Mouse-ear cress), this protein is Cell division cycle protein 27 homolog B (CDC27B).